The following is a 110-amino-acid chain: Large ribosomal subunit protein uL22 (110 aa).

It belongs to the universal ribosomal protein uL22 family. As to quaternary structure, part of the 50S ribosomal subunit.

In terms of biological role, this protein binds specifically to 23S rRNA; its binding is stimulated by other ribosomal proteins, e.g. L4, L17, and L20. It is important during the early stages of 50S assembly. It makes multiple contacts with different domains of the 23S rRNA in the assembled 50S subunit and ribosome. Functionally, the globular domain of the protein is located near the polypeptide exit tunnel on the outside of the subunit, while an extended beta-hairpin is found that lines the wall of the exit tunnel in the center of the 70S ribosome. This is Large ribosomal subunit protein uL22 from Baumannia cicadellinicola subsp. Homalodisca coagulata.